Here is a 175-residue protein sequence, read N- to C-terminus: Ribulose bisphosphate carboxylase small subunit, chloroplastic 2 (175 aa).

The transit peptide at 1 to 46 (MAPTVMASSATSVAPFQGLKSTAGLPVSRRSTNSGFGNVSNGGRIK) directs the protein to the chloroplast.

Belongs to the RuBisCO small chain family. As to quaternary structure, heterohexadecamer of 8 large and 8 small subunits.

Its subcellular location is the plastid. The protein localises to the chloroplast. In terms of biological role, ruBisCO catalyzes two reactions: the carboxylation of D-ribulose 1,5-bisphosphate, the primary event in carbon dioxide fixation, as well as the oxidative fragmentation of the pentose substrate. Both reactions occur simultaneously and in competition at the same active site. Although the small subunit is not catalytic it is essential for maximal activity. This chain is Ribulose bisphosphate carboxylase small subunit, chloroplastic 2, found in Oryza sativa subsp. japonica (Rice).